The sequence spans 1219 residues: Regulator of telomere elongation helicase 1 (1219 aa).

Positions 7 to 296 constitute a Helicase ATP-binding domain; that stretch reads NGVTVDFPFQ…TKAAQQGEPH (290 aa). An ATP-binding site is contributed by 42–49; the sequence is SPTGTGKT. Residues Cys-145, Cys-163, Cys-172, and Cys-207 each contribute to the [4Fe-4S] cluster site. Positions 151–167 match the Nuclear localization signal motif; the sequence is KKQESNHLQIHLCRKKV. The short motif at 250 to 253 is the DEAH box element; it reads DEAH. Disordered regions lie at residues 287–306, 757–786, 839–877, 979–1005, 1017–1054, 1132–1151, and 1159–1219; these read TKAAQQGEPHPEFSADSPSP, PAPAPRATAPSVRGEDAVSEAKSPGPFFST, EHSEQRAGSPGEEQAHSCSTLSLLSEKRPAEEPRGGRKK, RPEHSIPRRQRAQPVLDPTGRTAPDPK, DPQEHLNQGRPHLSPRPPPTGDPGSQPQWGSGVPRAGK, CTDLTGRPYPGMEPPGPQEE, and LTHR…EWGL. Residues 757 to 766 are compositionally biased toward low complexity; sequence PAPAPRATAP. Over residues 863–873 the composition is skewed to basic and acidic residues; the sequence is SEKRPAEEPRG. Residues 871–877 carry the Nuclear localization signal motif; it reads PRGGRKK. A compositionally biased stretch (polar residues) spans 1176-1185; that stretch reads KTQSKISSFL. The PIP-box signature appears at 1178-1185; the sequence is QSKISSFL. The segment covering 1200-1219 has biased composition (low complexity); that stretch reads AGPSQSSGPPHGPAASEWGL.

It belongs to the helicase family. RAD3/XPD subfamily. Interacts with TERF1. Interacts (via PIP-box) with PCNA; the interaction is direct and essential for suppressing telomere fragility. Interacts with MMS19; the interaction mediates the association of RTEL1 with the cytosolic iron-sulfur protein assembly (CIA) complex.

It is found in the nucleus. It carries out the reaction ATP + H2O = ADP + phosphate + H(+). Its function is as follows. A probable ATP-dependent DNA helicase implicated in telomere-length regulation, DNA repair and the maintenance of genomic stability. Acts as an anti-recombinase to counteract toxic recombination and limit crossover during meiosis. Regulates meiotic recombination and crossover homeostasis by physically dissociating strand invasion events and thereby promotes noncrossover repair by meiotic synthesis dependent strand annealing (SDSA) as well as disassembly of D loop recombination intermediates. Also disassembles T loops and prevents telomere fragility by counteracting telomeric G4-DNA structures, which together ensure the dynamics and stability of the telomere. In Homo sapiens (Human), this protein is Regulator of telomere elongation helicase 1.